A 641-amino-acid chain; its full sequence is Protein GAMETE EXPRESSED 3 (641 aa).

The N-terminal stretch at 1 to 29 is a signal peptide; sequence MVAFRFVYIPLPFFFFFFFFFVFFSGVSQ. Residues 441-461 form a helical membrane-spanning segment; it reads IIWFLLFEFVIMVLFAALVRF. The segment at 570–627 is disordered; the sequence is ITIFQTPSDESSSEESYRDEHYDDVADDEHDEDDLDRKQKGKLLAHSEGSSNDGDGIA. Residues 584–593 are compositionally biased toward basic and acidic residues; that stretch reads ESYRDEHYDD. The segment covering 594 to 603 has biased composition (acidic residues); it reads VADDEHDEDD.

Expressed in mature siliques and in pollen, mainly in the sperm cells. Detected in the egg cell within the female gametophyte.

Its subcellular location is the cell membrane. In terms of biological role, required for micropylar pollen tube guidance. Plays a role during early embryo patterning. This chain is Protein GAMETE EXPRESSED 3 (GEX3), found in Arabidopsis thaliana (Mouse-ear cress).